We begin with the raw amino-acid sequence, 691 residues long: Elongation factor G (691 aa).

Residues 8 to 282 (ERVRNIGIAA…AVVDYLPAPI (275 aa)) form the tr-type G domain. GTP contacts are provided by residues 17–24 (AHIDAGKT), 81–85 (DTPGH), and 135–138 (NKMD).

The protein belongs to the TRAFAC class translation factor GTPase superfamily. Classic translation factor GTPase family. EF-G/EF-2 subfamily.

The protein resides in the cytoplasm. Catalyzes the GTP-dependent ribosomal translocation step during translation elongation. During this step, the ribosome changes from the pre-translocational (PRE) to the post-translocational (POST) state as the newly formed A-site-bound peptidyl-tRNA and P-site-bound deacylated tRNA move to the P and E sites, respectively. Catalyzes the coordinated movement of the two tRNA molecules, the mRNA and conformational changes in the ribosome. In Thermosynechococcus vestitus (strain NIES-2133 / IAM M-273 / BP-1), this protein is Elongation factor G.